The chain runs to 143 residues: Large ribosomal subunit protein uL11 (143 aa).

Belongs to the universal ribosomal protein uL11 family. In terms of assembly, part of the ribosomal stalk of the 50S ribosomal subunit. Interacts with L10 and the large rRNA to form the base of the stalk. L10 forms an elongated spine to which L12 dimers bind in a sequential fashion forming a multimeric L10(L12)X complex. In terms of processing, one or more lysine residues are methylated.

Forms part of the ribosomal stalk which helps the ribosome interact with GTP-bound translation factors. The sequence is that of Large ribosomal subunit protein uL11 from Cellvibrio japonicus (strain Ueda107) (Pseudomonas fluorescens subsp. cellulosa).